Consider the following 492-residue polypeptide: N-succinylglutamate 5-semialdehyde dehydrogenase (492 aa).

An NAD(+)-binding site is contributed by 220-225 (GSANTG). Residues glutamate 243 and cysteine 277 contribute to the active site.

Belongs to the aldehyde dehydrogenase family. AstD subfamily.

It catalyses the reaction N-succinyl-L-glutamate 5-semialdehyde + NAD(+) + H2O = N-succinyl-L-glutamate + NADH + 2 H(+). It participates in amino-acid degradation; L-arginine degradation via AST pathway; L-glutamate and succinate from L-arginine: step 4/5. Catalyzes the NAD-dependent reduction of succinylglutamate semialdehyde into succinylglutamate. The chain is N-succinylglutamate 5-semialdehyde dehydrogenase from Escherichia coli O17:K52:H18 (strain UMN026 / ExPEC).